We begin with the raw amino-acid sequence, 116 residues long: Large ribosomal subunit protein bL20 (116 aa).

The protein belongs to the bacterial ribosomal protein bL20 family.

Its function is as follows. Binds directly to 23S ribosomal RNA and is necessary for the in vitro assembly process of the 50S ribosomal subunit. It is not involved in the protein synthesizing functions of that subunit. This is Large ribosomal subunit protein bL20 from Desulforapulum autotrophicum (strain ATCC 43914 / DSM 3382 / VKM B-1955 / HRM2) (Desulfobacterium autotrophicum).